The chain runs to 344 residues: Thiamine thiazole synthase (344 aa).

Residues Cys90, 111–112 (EA), Gly119, and Val184 each bind substrate. Cys232 is modified (2,3-didehydroalanine (Cys)). Substrate-binding positions include Asp234, His249, Met301, and 311–313 (RMG).

It belongs to the THI4 family. In terms of assembly, homooctamer. Interacts with cyp-41. Fe cation serves as cofactor. During the catalytic reaction, a sulfide is transferred from Cys-232 to a reaction intermediate, generating a dehydroalanine residue.

It is found in the cytoplasm. It localises to the nucleus. It catalyses the reaction [ADP-thiazole synthase]-L-cysteine + glycine + NAD(+) = [ADP-thiazole synthase]-dehydroalanine + ADP-5-ethyl-4-methylthiazole-2-carboxylate + nicotinamide + 3 H2O + 2 H(+). Involved in biosynthesis of the thiamine precursor thiazole. Catalyzes the conversion of NAD and glycine to adenosine diphosphate 5-(2-hydroxyethyl)-4-methylthiazole-2-carboxylic acid (ADT), an adenylated thiazole intermediate. The reaction includes an iron-dependent sulfide transfer from a conserved cysteine residue of the protein to a thiazole intermediate. The enzyme can only undergo a single turnover, which suggests it is a suicide enzyme. May have additional roles in adaptation to various stress conditions and in DNA damage tolerance. This chain is Thiamine thiazole synthase, found in Neurospora crassa (strain ATCC 24698 / 74-OR23-1A / CBS 708.71 / DSM 1257 / FGSC 987).